Reading from the N-terminus, the 298-residue chain is MGQNGTVQPTQLVIITGMSGAGKTVAIQSFEDLGFFCVDNLPPTLLPKFLELVKESGNKMNKVALVMDLRSRDFFDHLFVALDELAEQEWIVPQILFLDAQDSTLVARYKETRRTHPLAPNEPPLEGIRLERQLLEEIKGRAQIIYDTTGLKPRELREKIVRQFSVHAQSGFTVNVMSFGFKYGIPIDADLVFDVRFLPNPYYIEHMRPKTGLDDEVSSYVLKWGETQKFLEKLLDLLAFMLPYYQREGKSQLVIAIGCTGGQHRSVALAEYIARHFSADYKTVVSHRDMERRKEAHR.

17-24 (GMSGAGKT) contacts ATP. 68–71 (DLRS) contributes to the GTP binding site.

It belongs to the RapZ-like family.

Displays ATPase and GTPase activities. This chain is Nucleotide-binding protein GTNG_3015, found in Geobacillus thermodenitrificans (strain NG80-2).